A 65-amino-acid polypeptide reads, in one-letter code: Large ribosomal subunit protein uL30 (65 aa).

It belongs to the universal ribosomal protein uL30 family. In terms of assembly, part of the 50S ribosomal subunit.

In Rickettsia bellii (strain OSU 85-389), this protein is Large ribosomal subunit protein uL30.